The following is a 679-amino-acid chain: Tripartite terminase subunit 1 (679 aa).

A C3H1-type zinc finger spans residues 180–208 (CIYCLNEHMMLPNQGESLPSLMMCVNCKH).

The protein belongs to the herpesviridae TRM1 protein family. Associates with TRM2 and TRM3 to form the tripartite terminase complex. Interacts with portal protein.

The protein resides in the host nucleus. Its function is as follows. Component of the molecular motor that translocates viral genomic DNA in empty capsid during DNA packaging. Forms a tripartite terminase complex together with TRM2 and TRM3 in the host cytoplasm. Once the complex reaches the host nucleus, it interacts with the capsid portal vertex. This portal forms a ring in which genomic DNA is translocated into the capsid. TRM1 carries an endonuclease activity that plays an important role for the cleavage of concatemeric viral DNA into unit length genomes. This Saimiriine herpesvirus 2 (strain 11) (SaHV-2) protein is Tripartite terminase subunit 1.